We begin with the raw amino-acid sequence, 530 residues long: Fusaric acid resistance protein FusA (530 aa).

The signal sequence occupies residues 1–23 (MQSPATKGTLALAVLAVSLIMAG). Cys-24 carries N-palmitoyl cysteine lipidation. A lipid anchor (S-diacylglycerol cysteine) is attached at Cys-24. 2 disordered regions span residues 375-442 (NAGV…RQRA) and 476-530 (GVET…PAAR). 2 stretches are compositionally biased toward low complexity: residues 421–430 (RPQLPAVARR) and 494–530 (AAGAAAPAAASGAKPVAAAARPAQVAAAGAAGVPAAR).

Belongs to the outer membrane factor (OMF) (TC 1.B.17) family.

The protein localises to the cell membrane. Its function is as follows. Involved in the resistance (detoxification) of the fungal toxin fusaric acid. The polypeptide is Fusaric acid resistance protein FusA (fusA) (Burkholderia cepacia (Pseudomonas cepacia)).